The sequence spans 187 residues: Putative manganese efflux pump MntP (187 aa).

Helical transmembrane passes span 8 to 28 (FLSIGLAIDAFAVSLSSGFII), 39 to 59 (IALFFGIFQGVMPLIGWLTGL), 65 to 85 (LANFDHWIAFILLAAIGGKMI), 106 to 126 (LFALAIATSIDALAAGLGLSV), 131 to 151 (ILLACTLIASITFSLSFIGVF), and 166 to 186 (ILGGITLIGIGTKILVEGLII).

The protein belongs to the MntP (TC 9.B.29) family.

Its subcellular location is the cell inner membrane. Probably functions as a manganese efflux pump. This Rippkaea orientalis (strain PCC 8801 / RF-1) (Cyanothece sp. (strain PCC 8801)) protein is Putative manganese efflux pump MntP.